The sequence spans 574 residues: MDADSINSFFLIGALLAAVSVLLSPVSSRLGIPILLIFLAVGILAGEDGPGGILFDDYSTAYLVSNLALAIILLDGGMRTRVASFRVALWPALSLATFGVAITTSITGVMAAWLFDLHWLQGLLVGAIVGSTDAAAVFSLLKGRSLNERVGATLEIESGSNDPMAVFLTVTLIAILGNVDAELSASFMLISFIKQFGLGIFLGLGGGWLLWKLVNLSKLAEGLYSILVLSGGLMIYAASNKLGGSGILSIYLVGLFLGNKPTRGRHSILNVLDGMTWVSQIGMFLVLGLLLTPSDLLDIWLPGLALAFGMILFARPLAVWLSLLPFKSFSSRDRWFISWVGLRGAVPIILAVFPMMAGLPGAQLYFNLAFFVVLVSLLVQGASLTTAARLAKVELPPKPLPISRSGVEIYPSSEWEVFVYRLSENKWCIGEPLKRLSMPDGTRIAAVFRHNTLLHPSGSTCLEAGDILCVLGQEKSLEALSNLFSQAPETKEVPRFFGDFFIDTEVKLLDLAPIYGLELDEATGDMTVADLVAAELGSHPVLGDQFLWQSLHWVVAGLYEGKVTNVGIRLPAEA.

A run of 13 helical transmembrane segments spans residues 6 to 26 (INSF…LSPV), 34 to 54 (ILLI…GGIL), 58 to 78 (YSTA…DGGM), 87 to 107 (VALW…TSIT), 109 to 129 (VMAA…GAIV), 173 to 193 (IAIL…ISFI), 196 to 216 (FGLG…LVNL), 219 to 239 (LAEG…YAAS), 242 to 262 (LGGS…NKPT), 271 to 291 (VLDG…GLLL), 299 to 319 (IWLP…PLAV), 335 to 355 (WFIS…VFPM), and 359 to 379 (LPGA…SLLV). Residues 405-486 (SGVEIYPSSE…LEALSNLFSQ (82 aa)) enclose the RCK C-terminal domain.

This sequence belongs to the monovalent cation:proton antiporter 1 (CPA1) transporter (TC 2.A.36) family. NhaP2 subfamily.

Its subcellular location is the cell inner membrane. The catalysed reaction is K(+)(in) + H(+)(out) = K(+)(out) + H(+)(in). Functionally, k(+)/H(+) antiporter that extrudes potassium in exchange for external protons and maintains the internal concentration of potassium under toxic levels. This Shewanella sp. (strain MR-7) protein is K(+)/H(+) antiporter NhaP2.